Consider the following 444-residue polypeptide: Argininosuccinate synthase (444 aa).

ATP-binding positions include 18 to 26 (AFSGGLDTS) and alanine 44. Residue tyrosine 100 participates in L-citrulline binding. The ATP site is built by glycine 130 and threonine 132. 3 residues coordinate L-aspartate: threonine 132, asparagine 136, and aspartate 137. L-citrulline is bound at residue asparagine 136. ATP is bound at residue aspartate 137. Positions 140 and 193 each coordinate L-citrulline. Aspartate 195 is a binding site for ATP. Residues threonine 202, glutamate 204, and glutamate 281 each contribute to the L-citrulline site.

It belongs to the argininosuccinate synthase family. Type 2 subfamily. In terms of assembly, homotetramer.

It localises to the cytoplasm. It catalyses the reaction L-citrulline + L-aspartate + ATP = 2-(N(omega)-L-arginino)succinate + AMP + diphosphate + H(+). Its pathway is amino-acid biosynthesis; L-arginine biosynthesis; L-arginine from L-ornithine and carbamoyl phosphate: step 2/3. The polypeptide is Argininosuccinate synthase (Actinobacillus succinogenes (strain ATCC 55618 / DSM 22257 / CCUG 43843 / 130Z)).